The sequence spans 1104 residues: MPLLDGPRNGETVTASAHNGIPIIDGVDPSTLRGDIDQDPNRRQKIVVVGLGMVAVAFIEKLVKLDSERRKYDIVVIGEEPHIAYNRVGLSSYFEHRKIEDLYLNPKEWYGSFKDRSFDYYLNTRVTDVFPQHKTVKTSTGDIVSYDILVLATGSDAVLPTSTPGHDAKGIFVYRTISDLERLMEFAANHKGQTGVTVGGGLLGLEAAKAMTDLEDFGSVKLIDRNKWVLARQLDGDAGSLVTKKIRDLGLEVLHEKRVAKIHTDDDNNVTGILFEDGQELDCCCICFAIGIRPRDELGGSTGIQCAKRGGFVIDESLRTSVNDIYAIGECASWENQTFGIIAPGIEMADVLSFNLTNPDKEPKRFNRPDLSTKLKLLGVDVASFGDFFADRDGPKFLPGQRPSAESIGAADPNREEEPQVKALTYRDPFGGVYKKYLFTMDGKYLLGGMMIGDTKDYVKLNQMVKSQKPLEVPPSEFILGAQSGGEENADDLDDSTQICSCHNVTKGDVVESVKSGTCKTIADVKSCTKAGTGCGGCMPLVQSIFNKTMLDMGQEVSNNLCVHIPYSRADLYNVIAIRQLRTFDDVMKSAGKCPDSLGCEICKPAIASILSSLFNPHLMDKEYHELQETNDRFLANIQRNGTFSVVPRVPGGEITADKLIAIGQVAKKYNLYCKITGGQRIDMFGARKQDLLDIWTELVDAGMESGHAYAKSLRTVKSCVGTTWCRFGVGDSVGMAIRLEQRYKSIRAPHKFKGAVSGCVRECAEAQNKDFGLIATEKGFNIFVGGNGGAKPRHSELLAKDVPPEEVIPILDRYVIFYIRTADKLQRTARWLESLPGGIEYLKDVVLNDKLGIAAEMERQMQELVDSYFCEWTETVRNPKRRKYFQQFANTDETVENVEIVKEREQVRPTYWPKDGANEDFKGHQWSSLSWQPVIKADYFSDGPPAISSANIKRGDTQLAIFKVKGKYYATQQMCPHKRTFVLSDGLIGDDDNGKYWVSCPYHKRNFELNGEQAGRCQNDEAMNIATFPVEEREDGWIYMKLPPVEELDSVLGTEKWKVKKGEAVDPFEAYDKKYSGMKGKRAGAKGIEGSKPTRSPSNTIDW.

44–79 (QKIVVVGLGMVAVAFIEKLVKLDSERRKYDIVVIGE) is a binding site for FAD. 146-176 (YDILVLATGSDAVLPTSTPGHDAKGIFVYRT) contributes to the NAD(+) binding site. The interval 396–419 (KFLPGQRPSAESIGAADPNREEEP) is disordered. C500, C502, C535, and C538 together coordinate [2Fe-2S] cluster. [4Fe-4S] cluster-binding residues include C720, C726, C760, and C764. C764 contacts siroheme. One can recognise a Rieske domain in the interval 932 to 1040 (WQPVIKADYF…VEEREDGWIY (109 aa)). Residues C976, H978, C1001, and H1004 each coordinate [2Fe-2S] cluster. The disordered stretch occupies residues 1081 to 1104 (GKRAGAKGIEGSKPTRSPSNTIDW). The span at 1094–1104 (PTRSPSNTIDW) shows a compositional bias: polar residues.

It belongs to the nitrite and sulfite reductase 4Fe-4S domain family. Homodimer. The cofactor is siroheme. [4Fe-4S] cluster serves as cofactor. It depends on FAD as a cofactor. [2Fe-2S] cluster is required as a cofactor.

It catalyses the reaction NH4(+) + 3 NADP(+) + 2 H2O = nitrite + 3 NADPH + 5 H(+). It carries out the reaction NH4(+) + 3 NAD(+) + 2 H2O = nitrite + 3 NADH + 5 H(+). It participates in nitrogen metabolism; nitrate reduction (assimilation). The sequence is that of Nitrite reductase [NAD(P)H] (niiA) from Emericella nidulans (strain FGSC A4 / ATCC 38163 / CBS 112.46 / NRRL 194 / M139) (Aspergillus nidulans).